A 1183-amino-acid polypeptide reads, in one-letter code: LRR receptor-like serine/threonine-protein kinase FLS2 (1183 aa).

Positions 1 to 41 (MERNKFASKMSQHYTKTICIAVVLVAVLFSLSSAAAAGSGA) are cleaved as a signal peptide. The Extracellular segment spans residues 42-809 (AVSVQLEALL…GKKRVFSRTG (768 aa)). C87 and C94 form a disulfide bridge. N88 and N120 each carry an N-linked (GlcNAc...) asparagine glycan. LRR repeat units follow at residues 97–120 (AGQV…FLGN), 121–145 (ISTL…LGRL), 147–169 (ELEQ…LCNC), 171–193 (AMWA…IGDL), 194–217 (SNLE…MAKL), 218–241 (KGIM…IGDL), 242–265 (SNLQ…LGRC), 267–289 (NLTL…LGEL), 290–313 (TNLE…LRRC), 315–337 (SLLN…LGEL), 338–361 (PSLQ…LTNL), 363–385 (NLTI…IGSL), and 386–409 (RNLR…ISNC). A disulfide bridge links C167 with C189. 2 N-linked (GlcNAc...) asparagine glycosylation sites follow: N168 and N181. N267 carries an N-linked (GlcNAc...) asparagine glycan. 4 N-linked (GlcNAc...) asparagine glycosylation sites follow: N363, N395, N408, and N414. LRR repeat units lie at residues 433–457 (LQSL…LFDC), 459–480 (QLQK…LVGQ), 481–505 (LGNL…IGNM), 507–529 (KLIS…ISNM), 530–553 (SSLQ…VFEL), 555–577 (QLTI…VANL), 578–600 (RSLS…ALGR), 601–625 (LDQL…VIAS), 627–651 (SNVQ…IGGL), 652–675 (VMVQ…LAGC), 676–699 (KNLY…LFPQ), 701–724 (DLLT…IAAL), 725–748 (KHIQ…LANL), and 749–773 (TALR…VFRN). Residues N483, N504, and N528 are each glycosylated (N-linked (GlcNAc...) asparagine). N591 is a glycosylation site (N-linked (GlcNAc...) asparagine). An N-linked (GlcNAc...) asparagine glycan is attached at N634. N707, N747, N755, and N773 each carry an N-linked (GlcNAc...) asparagine glycan. The chain crosses the membrane as a helical span at residues 810–830 (LVILVVLIALSTLLLLMVATI). Residues 831-1183 (LLVSYRRYRR…LKMSKLVGED (353 aa)) are Cytoplasmic-facing. Residues 876–1179 (FDQGNVIGSS…LSSLLKMSKL (304 aa)) form the Protein kinase domain. ATP contacts are provided by residues 882 to 890 (IGSSNLSTV) and K908. D1013 acts as the Proton acceptor in catalysis.

This sequence belongs to the protein kinase superfamily. Ser/Thr protein kinase family. In terms of assembly, interacts with SERK2.

The protein resides in the cell membrane. The catalysed reaction is L-seryl-[protein] + ATP = O-phospho-L-seryl-[protein] + ADP + H(+). It catalyses the reaction L-threonyl-[protein] + ATP = O-phospho-L-threonyl-[protein] + ADP + H(+). In terms of biological role, constitutes the pattern-recognition receptor (PPR) that determines the specific perception of flagellin (flg22), a potent elicitor of the defense response to pathogen-associated molecular patterns (PAMPs). Recognizes flg22 from Pseudomonas aeruginosa and Acidovorax avenae. flg22 is a peptide derived from the bacterial flagellin N-terminus sequence. Does not recognize flg22 from Xanthomonas oryzae pv. oryzae (Xoo) or Xanthomonas oryzae pv. oryzicola (Xoc). This is LRR receptor-like serine/threonine-protein kinase FLS2 from Oryza sativa subsp. japonica (Rice).